Consider the following 521-residue polypeptide: Probable tRNA (uracil-O(2)-)-methyltransferase (521 aa).

The protein belongs to the TRM44 family.

The protein localises to the cytoplasm. It carries out the reaction uridine(44) in tRNA(Ser) + S-adenosyl-L-methionine = 2'-O-methyluridine(44) in tRNA(Ser) + S-adenosyl-L-homocysteine + H(+). Probable adenosyl-L-methionine (AdoMet)-dependent tRNA (uracil-O(2)-)-methyltransferase. This Drosophila melanogaster (Fruit fly) protein is Probable tRNA (uracil-O(2)-)-methyltransferase (trmt44).